The sequence spans 378 residues: Erythronate-4-phosphate dehydrogenase (378 aa).

Substrate contacts are provided by Ser-45 and Thr-66. Residues Asp-146 and Thr-175 each coordinate NAD(+). Residue Arg-208 is part of the active site. An NAD(+)-binding site is contributed by Asp-232. Glu-237 is a catalytic residue. The Proton donor role is filled by His-254. Residue Gly-257 coordinates NAD(+). Residue Tyr-258 participates in substrate binding.

This sequence belongs to the D-isomer specific 2-hydroxyacid dehydrogenase family. PdxB subfamily. In terms of assembly, homodimer.

The protein localises to the cytoplasm. It catalyses the reaction 4-phospho-D-erythronate + NAD(+) = (R)-3-hydroxy-2-oxo-4-phosphooxybutanoate + NADH + H(+). The protein operates within cofactor biosynthesis; pyridoxine 5'-phosphate biosynthesis; pyridoxine 5'-phosphate from D-erythrose 4-phosphate: step 2/5. In terms of biological role, catalyzes the oxidation of erythronate-4-phosphate to 3-hydroxy-2-oxo-4-phosphonooxybutanoate. This Escherichia coli (strain 55989 / EAEC) protein is Erythronate-4-phosphate dehydrogenase.